Consider the following 549-residue polypeptide: Carboxylesterase 1C (549 aa).

A signal peptide spans 1–18 (MWLCALVWASLAVCPIWG). Residue Asn79 is glycosylated (N-linked (GlcNAc...) asparagine). Cys87 and Cys116 form a disulfide bridge. The active-site Acyl-ester intermediate is Ser221. Cys273 and Cys284 form a disulfide bridge. N-linked (GlcNAc...) asparagine glycans are attached at residues Asn274, Asn275, and Asn302. Residue Glu340 is the Charge relay system of the active site. Asn375 is a glycosylation site (N-linked (GlcNAc...) asparagine). The Charge relay system role is filled by His453. A Phosphoserine modification is found at Ser471. Asn476 is a glycosylation site (N-linked (GlcNAc...) asparagine). A Prevents secretion from ER motif is present at residues 546–549 (TEHT).

The protein belongs to the type-B carboxylesterase/lipase family.

The protein localises to the endoplasmic reticulum lumen. It catalyses the reaction a carboxylic ester + H2O = an alcohol + a carboxylate + H(+). Functionally, involved in the detoxification of xenobiotics and in the activation of ester and amide prodrugs. Involved in the extracellular metabolism of lung surfactant. The protein is Carboxylesterase 1C (Ces1c) of Rattus norvegicus (Rat).